We begin with the raw amino-acid sequence, 356 residues long: UDP-N-acetylglucosamine--N-acetylmuramyl-(pentapeptide) pyrophosphoryl-undecaprenol N-acetylglucosamine transferase (356 aa).

Residues threonine 11–glycine 13, asparagine 122, serine 186, and glutamine 287 contribute to the UDP-N-acetyl-alpha-D-glucosamine site.

Belongs to the glycosyltransferase 28 family. MurG subfamily.

The protein localises to the cell inner membrane. The catalysed reaction is di-trans,octa-cis-undecaprenyl diphospho-N-acetyl-alpha-D-muramoyl-L-alanyl-D-glutamyl-meso-2,6-diaminopimeloyl-D-alanyl-D-alanine + UDP-N-acetyl-alpha-D-glucosamine = di-trans,octa-cis-undecaprenyl diphospho-[N-acetyl-alpha-D-glucosaminyl-(1-&gt;4)]-N-acetyl-alpha-D-muramoyl-L-alanyl-D-glutamyl-meso-2,6-diaminopimeloyl-D-alanyl-D-alanine + UDP + H(+). It functions in the pathway cell wall biogenesis; peptidoglycan biosynthesis. In terms of biological role, cell wall formation. Catalyzes the transfer of a GlcNAc subunit on undecaprenyl-pyrophosphoryl-MurNAc-pentapeptide (lipid intermediate I) to form undecaprenyl-pyrophosphoryl-MurNAc-(pentapeptide)GlcNAc (lipid intermediate II). This chain is UDP-N-acetylglucosamine--N-acetylmuramyl-(pentapeptide) pyrophosphoryl-undecaprenol N-acetylglucosamine transferase, found in Anaplasma marginale (strain St. Maries).